A 180-amino-acid polypeptide reads, in one-letter code: Large ribosomal subunit protein uL6 (180 aa).

Belongs to the universal ribosomal protein uL6 family. Part of the 50S ribosomal subunit.

Its function is as follows. This protein binds to the 23S rRNA, and is important in its secondary structure. It is located near the subunit interface in the base of the L7/L12 stalk, and near the tRNA binding site of the peptidyltransferase center. The polypeptide is Large ribosomal subunit protein uL6 (Protochlamydia amoebophila (strain UWE25)).